The chain runs to 362 residues: Atypical chemokine receptor 3 (362 aa).

Topologically, residues 1–47 (MDVHLFDYVEPGNYSDINWPCNSSDCIVVDTVQCPAMPNKNVLLYTL) are extracellular. N-linked (GlcNAc...) asparagine glycosylation is found at Asn13 and Asn22. Residues 48 to 68 (SFIYIFIFVIGMIANSVVVWV) form a helical membrane-spanning segment. At 69–81 (NIQAKTTGYDTHC) the chain is on the cytoplasmic side. Residues 82–102 (YILNLAIADLWVVITIPVWVV) form a helical membrane-spanning segment. Residues 103–118 (SLVQHNQWPMGELTCK) are Extracellular-facing. Cys117 and Cys196 are disulfide-bonded. A helical transmembrane segment spans residues 119 to 139 (ITHLIFSINLFGSIFFLACMS). The Cytoplasmic portion of the chain corresponds to 140–162 (VDRYLSITYFTSTSSYKKKMVRR). The helical transmembrane segment at 163 to 183 (VVCVLVWLLAFFVSLPDTYYL) threads the bilayer. Over 184–213 (KTVTSASNNETYCRSFYPEHSIKEWLIGME) the chain is Extracellular. A helical transmembrane segment spans residues 214-234 (LVSVILGFAVPFTIIAIFYFL). The Cytoplasmic portion of the chain corresponds to 235-252 (LARAMSASGDQEKHSSRK). Residues 253–273 (IIFSYVVVFLVCWLPYHFVVL) traverse the membrane as a helical segment. At 274-296 (LDIFSILHYIPFTCQLENVLFTA) the chain is on the extracellular side. The chain crosses the membrane as a helical span at residues 297–319 (LHVTQCLSLVHCCVNPVLYSFIN). The Cytoplasmic segment spans residues 320–362 (RNYRYELMKAFIFKYSAKTGLTKLIDASRVSETEYSALEQNTK). A C-terminal cytoplasmic tail region spans residues 324–362 (YELMKAFIFKYSAKTGLTKLIDASRVSETEYSALEQNTK). A phosphoserine mark is found at Ser347, Ser350, and Ser355.

Belongs to the G-protein coupled receptor 1 family. Atypical chemokine receptor subfamily. As to quaternary structure, homodimer. Can form heterodimers with CXCR4; heterodimerization may regulate CXCR4 signaling activity. Interacts with ARRB1 and ARRB2. In terms of processing, the Ser/Thr residues in the C-terminal cytoplasmic tail may be phosphorylated. Post-translationally, ubiquitinated at the Lys residues in its C-terminal cytoplasmic tail and is essential for correct trafficking from and to the cell membrane. Deubiquitinated by CXCL12-stimulation in a reversible manner. As to expression, expressed in vascular smooth muscle cells (at protein level). In brain, expressed in blood vessels, pyramidal cells in hippocampal subfield CA3, mature dentate gyrus granule cells, ventricle walls, olfactory bulb, accumbens shell, supraoptic, lateroanterior and ventromedial hypothalamic nuclei, medial region of thalamus, and motor nuclei, central gray and raphe magnus nucleus of brain stem. Detected in primary neurons, GABAergic neurons, astrocytes, cerebral cortex, ventral striatum and choroid plexus. Not detected in mesencephalon.

Its subcellular location is the cell membrane. It localises to the early endosome. It is found in the recycling endosome. Atypical chemokine receptor that controls chemokine levels and localization via high-affinity chemokine binding that is uncoupled from classic ligand-driven signal transduction cascades, resulting instead in chemokine sequestration, degradation, or transcytosis. Also known as interceptor (internalizing receptor) or chemokine-scavenging receptor or chemokine decoy receptor. Acts as a receptor for chemokines CXCL11 and CXCL12/SDF1. Chemokine binding does not activate G-protein-mediated signal transduction but instead induces beta-arrestin recruitment, leading to ligand internalization and activation of MAPK signaling pathway. Required for regulation of CXCR4 protein levels in migrating interneurons, thereby adapting their chemokine responsiveness. In glioma cells, transduces signals via MEK/ERK pathway, mediating resistance to apoptosis. Promotes cell growth and survival. Not involved in cell migration, adhesion or proliferation of normal hematopoietic progenitors but activated by CXCL11 in malignant hemapoietic cells, leading to phosphorylation of ERK1/2 (MAPK3/MAPK1) and enhanced cell adhesion and migration. Plays a regulatory role in CXCR4-mediated activation of cell surface integrins by CXCL12. Required for heart valve development. In terms of biological role, atypical chemokine receptor that controls chemokine levels and localization via high-affinity chemokine binding that is uncoupled from classic ligand-driven signal transduction cascades, resulting instead in chemokine sequestration, degradation, or transcytosis. Also known as interceptor (internalizing receptor) or chemokine-scavenging receptor or chemokine decoy receptor. Acts as a receptor for chemokines CXCL11 and CXCL12/SDF1. Chemokine binding does not activate G-protein-mediated signal transduction but instead induces beta-arrestin recruitment, leading to ligand internalization and activation of MAPK signaling pathway. Required for regulation of CXCR4 protein levels in migrating interneurons, thereby adapting their chemokine responsiveness. In glioma cells, transduces signals via MEK/ERK pathway, mediating resistance to apoptosis. Promotes cell growth and survival. Not involved in cell migration, adhesion or proliferation of normal hematopoietic progenitors but activated by CXCL11 in malignant hemapoietic cells, leading to phosphorylation of ERK1/2 (MAPK3/MAPK1) and enhanced cell adhesion and migration. Plays a regulatory role in CXCR4-mediated activation of cell surface integrins by CXCL12. Required for heart valve development. Regulates axon guidance in the oculomotor system through the regulation of CXCL12 levels. The polypeptide is Atypical chemokine receptor 3 (Rattus norvegicus (Rat)).